We begin with the raw amino-acid sequence, 416 residues long: Probable histone-binding protein lin-53 (416 aa).

6 WD repeats span residues 118 to 158 (NHEG…SVPK), 170 to 210 (GHTK…GANG), 220 to 260 (GHES…PGHA), 263 to 303 (AHSA…LKLH), 307 to 347 (SHRD…EDQT), and 364 to 404 (GHTA…YNDV).

Belongs to the WD repeat RBAP46/RBAP48/MSI1 family. Binds directly to helix 1 of the histone fold of histone H4, a region that is not accessible when H4 is in chromatin. Probable component of a NuRD-like complex, composed of at least lin-53 and hda-1. Interacts with lin-35. Interacts with hda-1; the interaction is direct. Component of the DRM complex, at least composed of lin-9, lin-35, lin-37, lin-52, lin-53, lin-54- dpl-1 and efl-1. Interacts with hcp-3.

Its subcellular location is the nucleus. The protein resides in the chromosome. It localises to the centromere. Functionally, core histone-binding subunit that may target chromatin assembly factors, chromatin remodeling factors and histone deacetylases to their histone substrates in a manner that is regulated by nucleosomal DNA. Required for hcp-3 and his-1 stabilization, localization of hcp-3 to centromeres and for proper chromosome segregation. Synthetic multivulva class B (synMuvB) protein. SynMuvB proteins are required to repress the induction of vulval development by Ras signaling and probably act by forming the multiprotein DRM complex that represses transcription. This Caenorhabditis briggsae protein is Probable histone-binding protein lin-53.